Consider the following 401-residue polypeptide: MLKAAVIGLQWGDEGKGKVVTYLSRRYDCVVRYSGGSNAGHTVDYGNFKMVHHLLPSADIKKQKMMYIGPGVVVDLDVLLEEIDQINNLIPESRSLLRISKQAHVVIPIYRDLDEKIDSSRANQIGTTRRGIGISYANRAMRCGLRLEDFETPARAESFLNEISRTWSIKFDVKMILDSLIEKYNKIRDLLIDSSEAVRVLKEKDLLFEGTQGVLLDVDMGTYPYVTSTNCSTTGIQPGFGYPVQVDKIFGVMKAYTTRVGEGPFPTELKDEVGENLRRLGSEYGATTRRPRRCGWLDLVLIKYAIETSACNALIMTKADILSGFEKIPICMGYKIGGKFYTQINNTAHLTEIEPVYEEIKGWKSLHSKEFDDFIYKIERELGLKFAYISTGPKIEEITEL.

GTP contacts are provided by residues glycine 12–lysine 18 and glycine 40–threonine 42. The active-site Proton acceptor is aspartate 13. Positions 13 and 40 each coordinate Mg(2+). IMP contacts are provided by residues aspartate 13–lysine 16, asparagine 38–histidine 41, threonine 128, arginine 142, glutamine 212, threonine 227, and arginine 290. The active-site Proton donor is the histidine 41. Alanine 286–arginine 292 is a substrate binding site. Residues arginine 292, lysine 318 to aspartate 320, and serine 390 to glycine 392 each bind GTP.

It belongs to the adenylosuccinate synthetase family. Homodimer. Mg(2+) serves as cofactor.

It localises to the cytoplasm. The catalysed reaction is IMP + L-aspartate + GTP = N(6)-(1,2-dicarboxyethyl)-AMP + GDP + phosphate + 2 H(+). Its pathway is purine metabolism; AMP biosynthesis via de novo pathway; AMP from IMP: step 1/2. Functionally, plays an important role in the de novo pathway of purine nucleotide biosynthesis. Catalyzes the first committed step in the biosynthesis of AMP from IMP. The polypeptide is Adenylosuccinate synthetase (Pseudothermotoga lettingae (strain ATCC BAA-301 / DSM 14385 / NBRC 107922 / TMO) (Thermotoga lettingae)).